A 459-amino-acid polypeptide reads, in one-letter code: Cysteine--tRNA ligase (459 aa).

Residue cysteine 29 coordinates Zn(2+). Residues 31-41 (PTVYDRAHIGN) carry the 'HIGH' region motif. Residues cysteine 209, histidine 234, and glutamate 238 each contribute to the Zn(2+) site. The short motif at 267–271 (KMSKS) is the 'KMSKS' region element. Lysine 270 is a binding site for ATP.

Belongs to the class-I aminoacyl-tRNA synthetase family. In terms of assembly, monomer. Zn(2+) serves as cofactor.

It is found in the cytoplasm. It catalyses the reaction tRNA(Cys) + L-cysteine + ATP = L-cysteinyl-tRNA(Cys) + AMP + diphosphate. The sequence is that of Cysteine--tRNA ligase from Rhodospirillum rubrum (strain ATCC 11170 / ATH 1.1.1 / DSM 467 / LMG 4362 / NCIMB 8255 / S1).